The following is a 361-amino-acid chain: 3-isopropylmalate dehydrogenase (361 aa).

78–91 is an NAD(+) binding site; the sequence is GTQWDSLPRHLRPE. The substrate site is built by R98, R108, R136, and D226. D226, D250, and D254 together coordinate Mg(2+). 284-296 contacts NAD(+); the sequence is GSAPDIAGQDKAN.

This sequence belongs to the isocitrate and isopropylmalate dehydrogenases family. LeuB type 1 subfamily. Homodimer. Mg(2+) is required as a cofactor. Requires Mn(2+) as cofactor.

The protein resides in the cytoplasm. The enzyme catalyses (2R,3S)-3-isopropylmalate + NAD(+) = 4-methyl-2-oxopentanoate + CO2 + NADH. The protein operates within amino-acid biosynthesis; L-leucine biosynthesis; L-leucine from 3-methyl-2-oxobutanoate: step 3/4. Catalyzes the oxidation of 3-carboxy-2-hydroxy-4-methylpentanoate (3-isopropylmalate) to 3-carboxy-4-methyl-2-oxopentanoate. The product decarboxylates to 4-methyl-2 oxopentanoate. The sequence is that of 3-isopropylmalate dehydrogenase from Thermosynechococcus vestitus (strain NIES-2133 / IAM M-273 / BP-1).